A 485-amino-acid chain; its full sequence is Probable cobyric acid synthase (485 aa).

Positions 250–435 (EIEIAVIRLP…LHGLFDNKNI (186 aa)) constitute a GATase cobBQ-type domain. The active-site Nucleophile is C328. H427 is a catalytic residue.

The protein belongs to the CobB/CobQ family. CobQ subfamily.

It functions in the pathway cofactor biosynthesis; adenosylcobalamin biosynthesis. Its function is as follows. Catalyzes amidations at positions B, D, E, and G on adenosylcobyrinic A,C-diamide. NH(2) groups are provided by glutamine, and one molecule of ATP is hydrogenolyzed for each amidation. The chain is Probable cobyric acid synthase from Methanosarcina barkeri (strain Fusaro / DSM 804).